A 256-amino-acid polypeptide reads, in one-letter code: Ferritin-3, chloroplastic (256 aa).

The transit peptide at 1–49 directs the protein to the chloroplast; sequence MLLRTASSFSLLKANADHILPLPNSSSSGIIRYSQSLGKNLVPCATKDT. The extension peptide (EP) stretch occupies residues 50–82; that stretch reads NNRPLTGVVFEPFEEVKKELDLVPTVPQASLAR. A Ferritin-like diiron domain is found at 83–236; that stretch reads QKYTDDCEAT…EYVAQLRRVG (154 aa). Glutamate 100, glutamate 135, histidine 138, glutamate 184, and glutamine 218 together coordinate Fe cation.

This sequence belongs to the ferritin family. As to quaternary structure, oligomer of 24 subunits. There are two types of subunits: L (light) chain and H (heavy) chain. The major chain can be light or heavy, depending on the species and tissue type. The functional molecule forms a roughly spherical shell with a diameter of 12 nm and contains a central cavity into which the insoluble mineral iron core is deposited.

It is found in the plastid. The protein localises to the chloroplast. The enzyme catalyses 4 Fe(2+) + O2 + 4 H(+) = 4 Fe(3+) + 2 H2O. In terms of biological role, stores iron in a soluble, non-toxic, readily available form. Important for iron homeostasis. Has ferroxidase activity. Iron is taken up in the ferrous form and deposited as ferric hydroxides after oxidation. The protein is Ferritin-3, chloroplastic of Glycine max (Soybean).